Here is a 768-residue protein sequence, read N- to C-terminus: Telomere repeats-binding bouquet formation protein 1 (768 aa).

ARM repeat units lie at residues 101 to 145 and 341 to 384; these read ELFQ…REVG and NGLP…GQNS. The stretch at 399 to 448 forms a coiled coil; sequence ETLREHWKAAKEILCRIKQFEKGGKEEKQQNRSGHYKDNTPSMKVNIQTN. Composition is skewed to basic and acidic residues over residues 422 to 436 and 461 to 475; these read GKEE…HYKD and RAED…ELRS. Disordered regions lie at residues 422 to 441 and 454 to 475; these read GKEE…TPSM and ADST…ELRS. Positions 524-700 are interaction with TERF1; the sequence is QNLDKEKTFD…EAMERRSPVP (177 aa). Residue Thr-648 is modified to Phosphothreonine. The Myb-like domain maps to 707–760; the sequence is KKRRIRKDFTKEEVNYLFHGVKTMGNHWNSILWSFPFQKGRRAVDLAHKYHRLI.

It belongs to the TERB1 family. Component of the MAJIN-TERB1-TERB2 complex, composed of MAJIN, TERB1 and TERB2. Interacts with TERF1, STAG3 and SUN1. Interacts (via Myb-like domain) with the cohesin complex; probably mediated via interaction with STAG3. Phosphorylated by CDK. Phosphorylation by CDK takes place in late prophase when the cap exchange is prominent. is important for the stabilization of telomere attachment but dispenable for the cap exchange. In terms of tissue distribution, expressed in testis and fetal oocytes.

It is found in the chromosome. It localises to the telomere. Its subcellular location is the nucleus inner membrane. Meiosis-specific telomere-associated protein involved in meiotic telomere attachment to the nucleus inner membrane, a crucial step for homologous pairing and synapsis. Component of the MAJIN-TERB1-TERB2 complex, which promotes telomere cap exchange by mediating attachment of telomeric DNA to the inner nuclear membrane and replacement of the protective cap of telomeric chromosomes: in early meiosis, the MAJIN-TERB1-TERB2 complex associates with telomeric DNA and the shelterin/telosome complex. During prophase, the complex matures and promotes release of the shelterin/telosome complex from telomeric DNA. In the MAJIN-TERB1-TERB2 complex, TERB1 probably mediates association with the shelterin/telosome complex via interaction with TERF1, promoting priming telomeric DNA attachment'. Promotes telomere association with the nuclear envelope and deposition of the SUN-KASH/LINC complex. Also recruits cohesin to telomeres to develop structural rigidity. This is Telomere repeats-binding bouquet formation protein 1 from Mus musculus (Mouse).